Here is a 104-residue protein sequence, read N- to C-terminus: Large ribosomal subunit protein uL24 (104 aa).

This sequence belongs to the universal ribosomal protein uL24 family. In terms of assembly, part of the 50S ribosomal subunit.

One of two assembly initiator proteins, it binds directly to the 5'-end of the 23S rRNA, where it nucleates assembly of the 50S subunit. In terms of biological role, one of the proteins that surrounds the polypeptide exit tunnel on the outside of the subunit. The sequence is that of Large ribosomal subunit protein uL24 from Shewanella halifaxensis (strain HAW-EB4).